The primary structure comprises 640 residues: Choline O-acetyltransferase (640 aa).

Phosphoserine is present on Ser-17. His-334 serves as the catalytic Proton acceptor. Ser-365 carries the phosphoserine modification. Residues 412 to 424 (GKTFIKKQKYSPD), Ser-450, and Gln-551 each bind CoA. The interval 614 to 640 (CSSRQPADSKPPAPKEKARGPSQAKQS) is disordered.

It belongs to the carnitine/choline acetyltransferase family. In terms of assembly, monomer.

The catalysed reaction is choline + acetyl-CoA = acetylcholine + CoA. Its function is as follows. Catalyzes the reversible synthesis of acetylcholine (ACh) from acetyl CoA and choline at cholinergic synapses. The polypeptide is Choline O-acetyltransferase (Chat) (Rattus norvegicus (Rat)).